The primary structure comprises 279 residues: Topoisomerase I damage affected protein 4 (279 aa).

The Extracellular portion of the chain corresponds to 1–32 (MNANSTTTAIGLTSPFEKLSFFPHSSNLILAH). The chain crosses the membrane as a helical span at residues 33 to 53 (LHEIIFSFVFYQLAFSVVAPF). The Cytoplasmic portion of the chain corresponds to 54-79 (LNKVVFRKHYTTIRDPLLKIDFNVHT). Residues 70–271 (LLKIDFNVHT…MIRIAKKLAK (202 aa)) enclose the TLC domain. The chain crosses the membrane as a helical span at residues 80 to 100 (VSMIQAVVSNTVLLPTLTTPM). At 101-110 (HYNVVTYTDS) the chain is on the extracellular side. Residues 111–131 (YSSMVSSLSAGYFIWDLTMCV) traverse the membrane as a helical segment. Residues 132–135 (RYFK) lie on the Cytoplasmic side of the membrane. A helical transmembrane segment spans residues 136-156 (LYGLEFTGHAIGSVYVMLLSL). The Extracellular segment spans residues 157 to 162 (RPFCQP). A helical transmembrane segment spans residues 163–183 (WIGRFLIYEASTPFVNINWFI). The Cytoplasmic segment spans residues 184–192 (MQCNAKSKN). Residues 193–213 (SIPLWFNVVNGLLLMTVFFVV) form a helical membrane-spanning segment. The Extracellular segment spans residues 214–238 (RICWGSIASALLFRQMWKVRDELPK). Residues 239–259 (FSAVTMMSLNIFMNLLNVLWF) traverse the membrane as a helical segment. At 260–279 (KKMIRIAKKLAKPAPTSKLD) the chain is on the cytoplasmic side.

It belongs to the TMEM56 family.

The protein localises to the membrane. The sequence is that of Topoisomerase I damage affected protein 4 (TDA4) from Saccharomyces cerevisiae (strain ATCC 204508 / S288c) (Baker's yeast).